The chain runs to 365 residues: Anhydro-N-acetylmuramic acid kinase (365 aa).

12–19 (GTSLDGID) serves as a coordination point for ATP.

It belongs to the anhydro-N-acetylmuramic acid kinase family.

It catalyses the reaction 1,6-anhydro-N-acetyl-beta-muramate + ATP + H2O = N-acetyl-D-muramate 6-phosphate + ADP + H(+). It functions in the pathway amino-sugar metabolism; 1,6-anhydro-N-acetylmuramate degradation. The protein operates within cell wall biogenesis; peptidoglycan recycling. Functionally, catalyzes the specific phosphorylation of 1,6-anhydro-N-acetylmuramic acid (anhMurNAc) with the simultaneous cleavage of the 1,6-anhydro ring, generating MurNAc-6-P. Is required for the utilization of anhMurNAc either imported from the medium or derived from its own cell wall murein, and thus plays a role in cell wall recycling. The polypeptide is Anhydro-N-acetylmuramic acid kinase (Rhizorhabdus wittichii (strain DSM 6014 / CCUG 31198 / JCM 15750 / NBRC 105917 / EY 4224 / RW1) (Sphingomonas wittichii)).